Here is a 76-residue protein sequence, read N- to C-terminus: Putative membrane protein insertion efficiency factor (76 aa).

The protein belongs to the UPF0161 family.

It is found in the cell inner membrane. Functionally, could be involved in insertion of integral membrane proteins into the membrane. This is Putative membrane protein insertion efficiency factor from Anaeromyxobacter dehalogenans (strain 2CP-C).